Reading from the N-terminus, the 81-residue chain is Photosystem I iron-sulfur center (81 aa).

4Fe-4S ferredoxin-type domains are found at residues 2–31 and 39–68; these read SHTV…MVPW and IASS…IRVY. [4Fe-4S] cluster is bound by residues Cys-11, Cys-14, Cys-17, Cys-21, Cys-48, Cys-51, Cys-54, and Cys-58.

In terms of assembly, the cyanobacterial PSI reaction center is composed of one copy each of PsaA,B,C,D,E,F,I,J,K,L,M and X, and forms trimeric complexes. [4Fe-4S] cluster is required as a cofactor.

The protein localises to the cellular thylakoid membrane. It carries out the reaction reduced [plastocyanin] + hnu + oxidized [2Fe-2S]-[ferredoxin] = oxidized [plastocyanin] + reduced [2Fe-2S]-[ferredoxin]. In terms of biological role, apoprotein for the two 4Fe-4S centers FA and FB of photosystem I (PSI); essential for photochemical activity. FB is the terminal electron acceptor of PSI, donating electrons to ferredoxin. The C-terminus interacts with PsaA/B/D and helps assemble the protein into the PSI complex. Required for binding of PsaD and PsaE to PSI. PSI is a plastocyanin/cytochrome c6-ferredoxin oxidoreductase, converting photonic excitation into a charge separation, which transfers an electron from the donor P700 chlorophyll pair to the spectroscopically characterized acceptors A0, A1, FX, FA and FB in turn. The sequence is that of Photosystem I iron-sulfur center from Microchaete diplosiphon (Fremyella diplosiphon).